The following is a 318-amino-acid chain: Death effector domain-containing protein (318 aa).

Residues 25–103 (SLHRMFDIVG…RHDLLPYVTL (79 aa)) form the DED domain. Disordered regions lie at residues 128–147 (PRAL…TVPP) and 160–191 (QMCS…KEKQ).

In terms of assembly, interacts with CASP8, CASP10, KRT8, KRT18, CASP3 and FADD. Homodimerizes and heterodimerizes with DEDD2. In terms of processing, exists predominantly in a mono- or diubiquitinated form. In terms of tissue distribution, widely expressed with highest levels in testis.

The protein localises to the cytoplasm. Its subcellular location is the nucleus. The protein resides in the nucleolus. In terms of biological role, a scaffold protein that directs CASP3 to certain substrates and facilitates their ordered degradation during apoptosis. May also play a role in mediating CASP3 cleavage of KRT18. Regulates degradation of intermediate filaments during apoptosis. May play a role in the general transcription machinery in the nucleus and might be an important regulator of the activity of GTF3C3. Inhibits DNA transcription in vitro. The sequence is that of Death effector domain-containing protein (DEDD) from Homo sapiens (Human).